We begin with the raw amino-acid sequence, 840 residues long: OTU domain-containing protein 7B (840 aa).

A disordered region spans residues 49–88 (AGNLSPPFSGGSTCPKTPEKGGSDREPTRPSRPILQRQDD). The segment covering 65–77 (TPEKGGSDREPTR) has biased composition (basic and acidic residues). Serine 100 bears the Phosphoserine mark. Positions 152-401 (ERDLIEQSML…AVDPGKGWEW (250 aa)) are TRAF-binding. The segment at 167–440 (AGRLNWWVSM…VKWIPLSSDS (274 aa)) is catalytic. Residues 183–365 (LLPLATTGDG…QAHFSALVSM (183 aa)) form the OTU domain. Residues 187–193 (ATTGDGN) are regulatory loop. Aspartate 191 is a catalytic residue. Catalysis depends on cysteine 194, which acts as the Nucleophile. Histidine 358 (proton acceptor) is an active-site residue. The span at 440 to 452 (SQAPLAQPESPTA) shows a compositional bias: polar residues. Disordered regions lie at residues 440-592 (SQAP…YSQE) and 653-710 (IMNG…VHCQ). Basic and acidic residues-rich tracts occupy residues 456–471 (DEPR…DKES) and 488–500 (SKRD…KRAD). A phosphoserine mark is found at serine 464, serine 467, and serine 471. Positions 483–498 (RRKEKSKRDREKDKKR) match the Nuclear localization signal motif. The segment covering 531–541 (KPGGLGSGSGI) has biased composition (gly residues). Threonine 730 carries the post-translational modification Phosphothreonine. Residues 793–828 (PPTQTKCKQPNCSFYGHPETNNLCSCCYREELRRRE) form an A20-type zinc finger. Residues cysteine 799, cysteine 804, cysteine 816, and cysteine 819 each coordinate Zn(2+).

It belongs to the peptidase C64 family. In terms of assembly, interacts with TRAF6. Interacts with PARK7, leading to inhibit deubiquitinase activity. Interacts with EGFR, ITCH and NEDD4. Interacts with TRAF3. Interacts with ZAP70 in activated T cells, but not in resting T cells. Phosphorylated by EGFR.

Its subcellular location is the cytoplasm. It localises to the nucleus. It catalyses the reaction Thiol-dependent hydrolysis of ester, thioester, amide, peptide and isopeptide bonds formed by the C-terminal Gly of ubiquitin (a 76-residue protein attached to proteins as an intracellular targeting signal).. Deubiquitinase activity is inhibited following interaction with PARK7. In terms of biological role, negative regulator of the non-canonical NF-kappa-B pathway that acts by mediating deubiquitination of TRAF3, an inhibitor of the NF-kappa-B pathway, thereby acting as a negative regulator of B-cell responses. In response to non-canonical NF-kappa-B stimuli, deubiquitinates 'Lys-48'-linked polyubiquitin chains of TRAF3, preventing TRAF3 proteolysis and over-activation of non-canonical NF-kappa-B. Negatively regulates mucosal immunity against infections. Deubiquitinates ZAP70, and thereby regulates T cell receptor (TCR) signaling that leads to the activation of NF-kappa-B. Plays a role in T cell homeostasis and is required for normal T cell responses, including production of IFNG and IL2. Mediates deubiquitination of EGFR. Has deubiquitinating activity toward 'Lys-11', 'Lys-48' and 'Lys-63'-linked polyubiquitin chains. Has a much higher catalytic rate with 'Lys-11'-linked polyubiquitin chains (in vitro); however the physiological significance of these data are unsure. Hydrolyzes both linear and branched forms of polyubiquitin. Acts as a regulator of mTORC1 and mTORC2 assembly by mediating 'Lys-63'-linked deubiquitination of MLST8, thereby promoting assembly of the mTORC2 complex, while inibiting formation of the mTORC1 complex. This chain is OTU domain-containing protein 7B (Otud7b), found in Mus musculus (Mouse).